Consider the following 109-residue polypeptide: Aquaporin-2 (109 aa).

Over 1-6 (SIAFSR) the chain is Cytoplasmic. A helical membrane pass occupies residues 7–27 (AVFAEFLATLIFVFFGLGSAL). Residues 28–35 (NWQQSLPS) are Extracellular-facing. A helical membrane pass occupies residues 36–54 (VLQIAMAFGLAIGTLVQAL). The Cytoplasmic segment spans residues 55-59 (GHISG). Residues 60–69 (AHINPAVTVA) constitute an intramembrane region (discontinuously helical). The NPA 1 signature appears at 63 to 65 (NPA). Topologically, residues 70 to 80 (CLVGCHVSFLR) are cytoplasmic. The helical transmembrane segment at 81–102 (AAFYVAAQLLGAVAGAALLHEV) threads the bilayer. Over 103 to 109 (TPSDVRG) the chain is Extracellular.

It belongs to the MIP/aquaporin (TC 1.A.8) family. As to quaternary structure, homotetramer. In terms of processing, serine phosphorylation is necessary and sufficient for expression at the apical membrane. Endocytosis is not phosphorylation-dependent. N-glycosylated.

It localises to the apical cell membrane. Its subcellular location is the basolateral cell membrane. The protein localises to the cell membrane. It is found in the cytoplasmic vesicle membrane. The protein resides in the golgi apparatus. It localises to the trans-Golgi network membrane. It carries out the reaction H2O(in) = H2O(out). It catalyses the reaction glycerol(in) = glycerol(out). Functionally, forms a water-specific channel that provides the plasma membranes of renal collecting duct with high permeability to water, thereby permitting water to move in the direction of an osmotic gradient. Plays an essential role in renal water homeostasis. Could also be permeable to glycerol. The sequence is that of Aquaporin-2 from Talpa europaea (European mole).